The sequence spans 194 residues: MSQNGAPGMQEESLQGSWVELHFSNNGNGGSVPASVSIYNGDMEKILLDAQHESGRSSSKSSHCDSPPRSQTPQDTNRASETDTHSIGEKNSSQSEEDDIERRKEVESILKKNSDWIWDWSSRPENIPPKEFLFKHPKRTATLSMRNTSVMKKGGIFSAEFLKVFLPSLLLSHLLAIGLGIYIGRRLTTSTSTF.

Positions 1 to 102 (MSQNGAPGMQ…SQSEEDDIER (102 aa)) are disordered. A compositionally biased stretch (basic and acidic residues) spans 42-55 (DMEKILLDAQHESG). 5 positions are modified to phosphoserine: S54, S66, S86, S92, and S95. Residues 56–69 (RSSSKSSHCDSPPR) show a composition bias toward low complexity. Residues 78–88 (RASETDTHSIG) are compositionally biased toward basic and acidic residues. The short motif at 100 to 125 (IERRKEVESILKKNSDWIWDWSSRPE) is the BH3 element. A helical membrane pass occupies residues 164-184 (VFLPSLLLSHLLAIGLGIYIG).

It belongs to the NIP3 family. In terms of assembly, homodimer. Binds to BCL2. Interacts with BNIP3L and ACAA2. Interacts (via BH3 domain) with SPATA18 (via coiled-coil domains). Interacts with BOK; promotes BOK oligomerization. Interacts with PPTC7; this interaction promotes BNIP3 degradation. (Microbial infection) Interacts with adenovirus E1B 19 kDa protein. As to quaternary structure, (Microbial infection) Interacts with Epstein-Barr virus BHRF1.

The protein localises to the mitochondrion. It localises to the mitochondrion outer membrane. Functionally, apoptosis-inducing protein that can overcome BCL2 suppression. May play a role in repartitioning calcium between the two major intracellular calcium stores in association with BCL2. Involved in mitochondrial quality control via its interaction with SPATA18/MIEAP: in response to mitochondrial damage, participates in mitochondrial protein catabolic process (also named MALM) leading to the degradation of damaged proteins inside mitochondria. The physical interaction of SPATA18/MIEAP, BNIP3 and BNIP3L/NIX at the mitochondrial outer membrane regulates the opening of a pore in the mitochondrial double membrane in order to mediate the translocation of lysosomal proteins from the cytoplasm to the mitochondrial matrix. Plays an important role in the calprotectin (S100A8/A9)-induced cell death pathway. In Homo sapiens (Human), this protein is BCL2/adenovirus E1B 19 kDa protein-interacting protein 3.